The following is a 525-amino-acid chain: GMP synthase [glutamine-hydrolyzing] (525 aa).

The region spanning arginine 9–leucine 207 is the Glutamine amidotransferase type-1 domain. The active-site Nucleophile is the cysteine 86. Active-site residues include histidine 181 and glutamate 183. The region spanning tryptophan 208 to arginine 400 is the GMPS ATP-PPase domain. ATP is bound at residue serine 235 to serine 241.

In terms of assembly, homodimer.

It carries out the reaction XMP + L-glutamine + ATP + H2O = GMP + L-glutamate + AMP + diphosphate + 2 H(+). It participates in purine metabolism; GMP biosynthesis; GMP from XMP (L-Gln route): step 1/1. In terms of biological role, catalyzes the synthesis of GMP from XMP. The protein is GMP synthase [glutamine-hydrolyzing] of Pseudomonas fluorescens (strain SBW25).